Here is a 460-residue protein sequence, read N- to C-terminus: Cysteine--tRNA ligase (460 aa).

Cys-28 contacts Zn(2+). Positions 30-40 match the 'HIGH' region motif; it reads VTIYDLCHIGH. Zn(2+) is bound by residues Cys-209, His-234, and Glu-238. The short motif at 266 to 270 is the 'KMSKS' region element; that stretch reads KMSKS. Position 269 (Lys-269) interacts with ATP.

This sequence belongs to the class-I aminoacyl-tRNA synthetase family. As to quaternary structure, monomer. Zn(2+) serves as cofactor.

The protein resides in the cytoplasm. It carries out the reaction tRNA(Cys) + L-cysteine + ATP = L-cysteinyl-tRNA(Cys) + AMP + diphosphate. The sequence is that of Cysteine--tRNA ligase from Shewanella frigidimarina (strain NCIMB 400).